We begin with the raw amino-acid sequence, 716 residues long: MMSIRQRREIRATEVSEDFPAQEENVKLENKLPSGCTSRRLWKILSLTIGGTIALCIGLLTSVYLATLHENDLWFSNIKEVEREISFRTECGLYYSYYKQMLQAPTLVQGFYGLIYDNKTESMKTINLLQRMNIYQEVFLSILYRVLPVQKYLEPVYFYIYTLFGLQAIYVTALYITSWLLSGTWLSGLLAAFWYVTNRIDTTRVEFTIPLRENWALPFFAIQIAAITYFLRPNLQPLSERLTLLAIFISTFLFSLTWQFNQFMMLMQALVLFTLDSLDMLPAVKATWLYGIQITSLLLVCILQFFNSMILGSLLISFNLSVFIARKLQKNLKTGSFLNRLGKLLLHLFMVLCLTLFLNNIIKKILNLKSDEHIFKFLKAKFGLGATRDFDANLYLCEEAFGLLPFNTFGRLSDTLLFYAYIFVLSITVIVAFVVAFHNLSDSTNQQSVGKMEKGTVDLKPETAYNLIHTILFGFLALSTMRMKYLWTSHMCVFASFGLCSPEIWELLLKSVHLYNPKRICIMRYSVPILILLYLCYKFWPGMMDELSELREFYDPDTVELMNWINSNTPRKAVFAGSMQLLAGVKLCTGRTLTNHPHYEDSSLRERTRAVYQIYAKRAPEEVHALLRSFGTDYVILEDSICYERRHRRGCRLRDLLDIANGHMMDGPGENDPDLKPADHPRFCEEIKRNLPPYVAYFTRVFQNKTFHVYKLSRNK.

At 1–43 (MMSIRQRREIRATEVSEDFPAQEENVKLENKLPSGCTSRRLWK) the chain is on the cytoplasmic side. A helical membrane pass occupies residues 44–64 (ILSLTIGGTIALCIGLLTSVY). At 65–154 (LATLHENDLW…RVLPVQKYLE (90 aa)) the chain is on the lumenal side. Residue asparagine 118 is glycosylated (N-linked (GlcNAc...) asparagine). A helical membrane pass occupies residues 155-182 (PVYFYIYTLFGLQAIYVTALYITSWLLS). At 183-184 (GT) the chain is on the cytoplasmic side. An intramembrane region (name=3) is located at residues 185 to 197 (WLSGLLAAFWYVT). Over 198 to 215 (NRIDTTRVEFTIPLRENW) the chain is Cytoplasmic. Positions 216–230 (ALPFFAIQIAAITYF) form an intramembrane region, name=4. At 231-239 (LRPNLQPLS) the chain is on the cytoplasmic side. A helical membrane pass occupies residues 240–256 (ERLTLLAIFISTFLFSL). Residues 257 to 262 (TWQFNQ) lie on the Lumenal side of the membrane. Residues 263–279 (FMMLMQALVLFTLDSLD) traverse the membrane as a helical segment. At 280-289 (MLPAVKATWL) the chain is on the cytoplasmic side. The chain crosses the membrane as a helical span at residues 290-306 (YGIQITSLLLVCILQFF). Residues 307–308 (NS) lie on the Lumenal side of the membrane. Residues 309 to 323 (MILGSLLISFNLSVF) traverse the membrane as a helical segment. The Cytoplasmic segment spans residues 324–338 (IARKLQKNLKTGSFL). A helical membrane pass occupies residues 339–359 (NRLGKLLLHLFMVLCLTLFLN). Topologically, residues 360–414 (NIIKKILNLKSDEHIFKFLKAKFGLGATRDFDANLYLCEEAFGLLPFNTFGRLSD) are lumenal. A helical transmembrane segment spans residues 415–437 (TLLFYAYIFVLSITVIVAFVVAF). The Cytoplasmic portion of the chain corresponds to 438–465 (HNLSDSTNQQSVGKMEKGTVDLKPETAY). The helical transmembrane segment at 466 to 485 (NLIHTILFGFLALSTMRMKY) threads the bilayer. Topologically, residues 486-487 (LW) are lumenal. The helical transmembrane segment at 488-499 (TSHMCVFASFGL) threads the bilayer. The Cytoplasmic portion of the chain corresponds to 500–522 (CSPEIWELLLKSVHLYNPKRICI). A helical membrane pass occupies residues 523 to 539 (MRYSVPILILLYLCYKF). Residues 540–716 (WPGMMDELSE…FHVYKLSRNK (177 aa)) are Lumenal-facing. The N-linked (GlcNAc...) asparagine glycan is linked to asparagine 704.

It belongs to the dpy-19 family.

It is found in the endoplasmic reticulum membrane. It carries out the reaction L-tryptophyl-[protein] + a di-trans,poly-cis-dolichyl beta-D-mannosyl phosphate = C-alpha-D-mannosyl-L-tryptophyl-[protein] + a di-trans,poly-cis-dolichyl phosphate + H(+). The protein operates within protein modification; protein glycosylation. In terms of biological role, C-mannosyltransferase that mediates C-mannosylation of tryptophan residues on target proteins. The reaction occurs on the luminal side of the endoplasmic reticulum and involves the transfer of a mannose unit from a dolichylphosphate mannose (Dol-P-Man) donor to an acceptor protein containing a WxxW or WxxC consensus sequence. C-mannosylates RSPO1, a Wnt signaling regulator, preferentially at the first Trp residue in the sequence WxxW. C-mannosylates the netrin receptor UNC5A, preferentially at the third tryptophan of WxxWxxWxxC sequence. The chain is Protein C-mannosyl-transferase DPY19L3 (DPY19L3) from Pongo abelii (Sumatran orangutan).